We begin with the raw amino-acid sequence, 529 residues long: Glucose transporter 2A (529 aa).

A disordered region spans residues Met-1–Ala-22. The Cytoplasmic segment spans residues Met-1–Gln-43. A helical membrane pass occupies residues Val-44 to Tyr-64. Residues Glu-65 to Ser-119 lie on the Extracellular side of the membrane. Residues Leu-120–Ala-140 traverse the membrane as a helical segment. The Cytoplasmic segment spans residues Gly-141–Ser-152. Residues Phe-153–Thr-173 traverse the membrane as a helical segment. Over Asn-174–Glu-175 the chain is Extracellular. A helical membrane pass occupies residues Phe-176–Ile-196. Residues Cys-197–Gly-214 are Cytoplasmic-facing. A helical membrane pass occupies residues Val-215–Leu-235. The Extracellular segment spans residues Asp-236–Arg-250. Residues Phe-251–Phe-271 traverse the membrane as a helical segment. Over Leu-272–Gln-300 the chain is Cytoplasmic. A helical membrane pass occupies residues Met-301–Asn-321. The Extracellular portion of the chain corresponds to Ala-322–Ser-339. A helical membrane pass occupies residues Leu-340–Ala-360. Topologically, residues Ser-361–Met-368 are cytoplasmic. A helical membrane pass occupies residues Phe-369–Phe-389. The Extracellular portion of the chain corresponds to Pro-390–Thr-404. The chain crosses the membrane as a helical span at residues Gly-405 to Ala-425. Residues Gln-426–Ser-439 are Cytoplasmic-facing. A helical transmembrane segment spans residues Phe-440–Thr-460. Residues Glu-461–Ala-476 are Extracellular-facing. A helical transmembrane segment spans residues Val-477 to Leu-497. Topologically, residues Tyr-498–Asn-529 are cytoplasmic. Residues Asn-508–Asn-529 are disordered.

The protein belongs to the major facilitator superfamily. Sugar transporter (TC 2.A.1.1) family.

Its subcellular location is the membrane. In terms of biological role, facilitative glucose transporter. The sequence is that of Glucose transporter 2A (THT2A) from Trypanosoma brucei brucei.